The sequence spans 879 residues: Probable phospholipid transport protein YdbH (879 aa).

The Cytoplasmic portion of the chain corresponds to 1-6; the sequence is MLGKYK. The helical transmembrane segment at 7-29 threads the bilayer; that stretch reads AVLALLLLIILVPLTLLMTLGLW. Residues 30-879 are Periplasmic-facing; it reads VPTLAGIWLP…PQGKECEEKQ (850 aa).

In terms of assembly, interacts with the outer membrane lipoprotein YnbE.

Its subcellular location is the cell inner membrane. Involved in outer membrane lipid homeostasis. Interacts with the outer membrane lipoprotein YnbE to form a functional protein bridge connecting the inner and outer membranes of the cell. Likely transports phospholipids between the inner membrane and the outer membrane. It would provide a bridge-like structure that protects phospholipids as they travel across the periplasm. Functionally, tamB, YdbH and YhdP are redundant, but not equivalent, in performing an essential function for growth and maintaining lipid homeostasis in the outer membrane. Any of these three proteins is sufficient for growth. This Escherichia coli (strain K12) protein is Probable phospholipid transport protein YdbH (ydbH).